The following is a 1035-amino-acid chain: Translation initiation factor IF-2 (1035 aa).

Basic and acidic residues predominate over residues 56–66 (KDDKSNTDDNK). Disordered stretches follow at residues 56–80 (KDDK…SSEA) and 114–402 (ANDA…VIKN). Residues 68–78 (ASAHSVAQHSS) show a composition bias toward polar residues. 2 stretches are compositionally biased toward basic and acidic residues: residues 114–137 (ANDA…RVET) and 146–200 (LVRE…EIKD). Positions 219-228 (DSATNVNLNE) are enriched in polar residues. The segment covering 229–238 (SIDKDKKTND) has biased composition (basic and acidic residues). The segment covering 239–253 (NRQVSTDNSAVNNEE) has biased composition (polar residues). A compositionally biased stretch (basic and acidic residues) spans 259–315 (LNKKDMDKKNNNKKNEAKKNAEKKNEAKKNEKNDNKGGNAKKNEHRSPDMKKNDSNR). The segment covering 316–325 (PQDANKQNSK) has biased composition (polar residues). Composition is skewed to basic and acidic residues over residues 327-347 (AADK…EIPK) and 354-385 (QKEE…KEQP). Residues 537 to 706 (PRPPVVVVMG…LLAADMLELK (170 aa)) enclose the tr-type G domain. The G1 stretch occupies residues 546 to 553 (GHVDHGKT). Residue 546–553 (GHVDHGKT) participates in GTP binding. A G2 region spans residues 571-575 (GITQH). The segment at 592–595 (DTPG) is G3. GTP-binding positions include 592–596 (DTPGH) and 646–649 (NKID). The interval 646 to 649 (NKID) is G4. The tract at residues 682–684 (SAK) is G5.

Belongs to the TRAFAC class translation factor GTPase superfamily. Classic translation factor GTPase family. IF-2 subfamily.

It is found in the cytoplasm. In terms of biological role, one of the essential components for the initiation of protein synthesis. Protects formylmethionyl-tRNA from spontaneous hydrolysis and promotes its binding to the 30S ribosomal subunits. Also involved in the hydrolysis of GTP during the formation of the 70S ribosomal complex. The sequence is that of Translation initiation factor IF-2 from Acetivibrio thermocellus (strain ATCC 27405 / DSM 1237 / JCM 9322 / NBRC 103400 / NCIMB 10682 / NRRL B-4536 / VPI 7372) (Clostridium thermocellum).